We begin with the raw amino-acid sequence, 416 residues long: CinA-like protein (416 aa).

The protein belongs to the CinA family.

The sequence is that of CinA-like protein from Solibacter usitatus (strain Ellin6076).